We begin with the raw amino-acid sequence, 78 residues long: Small ribosomal subunit protein uS17 (78 aa).

Belongs to the universal ribosomal protein uS17 family. Part of the 30S ribosomal subunit.

Its function is as follows. One of the primary rRNA binding proteins, it binds specifically to the 5'-end of 16S ribosomal RNA. This is Small ribosomal subunit protein uS17 from Maricaulis maris (strain MCS10) (Caulobacter maris).